The sequence spans 63 residues: Putative F-box protein At1g47702 (63 aa).

Residues 23–63 (KDRISDLPNRILGKIIVKLPLDEAVRIMALSKRWKSIWDDN) form the F-box domain.

This chain is Putative F-box protein At1g47702, found in Arabidopsis thaliana (Mouse-ear cress).